Consider the following 557-residue polypeptide: 2-succinyl-5-enolpyruvyl-6-hydroxy-3-cyclohexene-1-carboxylate synthase (557 aa).

The protein belongs to the TPP enzyme family. MenD subfamily. As to quaternary structure, homodimer. Mg(2+) is required as a cofactor. Requires Mn(2+) as cofactor. It depends on thiamine diphosphate as a cofactor.

It carries out the reaction isochorismate + 2-oxoglutarate + H(+) = 5-enolpyruvoyl-6-hydroxy-2-succinyl-cyclohex-3-ene-1-carboxylate + CO2. It functions in the pathway quinol/quinone metabolism; 1,4-dihydroxy-2-naphthoate biosynthesis; 1,4-dihydroxy-2-naphthoate from chorismate: step 2/7. Its pathway is quinol/quinone metabolism; menaquinone biosynthesis. Catalyzes the thiamine diphosphate-dependent decarboxylation of 2-oxoglutarate and the subsequent addition of the resulting succinic semialdehyde-thiamine pyrophosphate anion to isochorismate to yield 2-succinyl-5-enolpyruvyl-6-hydroxy-3-cyclohexene-1-carboxylate (SEPHCHC). The sequence is that of 2-succinyl-5-enolpyruvyl-6-hydroxy-3-cyclohexene-1-carboxylate synthase from Staphylococcus aureus (strain Mu3 / ATCC 700698).